Here is a 353-residue protein sequence, read N- to C-terminus: MSDAYLALETGDVVEATARAPGMARGELVFTTAYTGYEESLTDPSYEAQVLTFAYPLIGNYGVRPERTESDRVHPSAVVARELTDDVADWLRTEGVPAVDGIDTRDLVLDIRDGGAMQVGIAAGPDASPATARAQLADCPRLSARTEIGAHVSVDTAETHGNGDTTVALVDCGAKRSIIDAFVARGATVHRLPYDATPADIAAVDPDLLFISNGPGDPANFDAAEHLVDEYIGTVPIAGICLGQQIVARALGGDTEKMDFGHRGVNQPVLDHDSGRVVMTTQNHGYTVADPGDLTVTQVNVNDGTPEALDSAPLDVLTRQYHPEANPGPHDTRGFFDDVLAMADASYTPATAD.

The segment at 1–166 (MSDAYLALET…AETHGNGDTT (166 aa)) is CPSase. Positions 45, 214, and 216 each coordinate L-glutamine. The 184-residue stretch at 166 to 349 (TVALVDCGAK…LAMADASYTP (184 aa)) folds into the Glutamine amidotransferase type-1 domain. The Nucleophile role is filled by Cys241. L-glutamine contacts are provided by Leu242, Gln245, Asn283, Gly285, and Tyr286. Active-site residues include His322 and Glu324.

Belongs to the CarA family. Composed of two chains; the small (or glutamine) chain promotes the hydrolysis of glutamine to ammonia, which is used by the large (or ammonia) chain to synthesize carbamoyl phosphate. Tetramer of heterodimers (alpha,beta)4.

It carries out the reaction hydrogencarbonate + L-glutamine + 2 ATP + H2O = carbamoyl phosphate + L-glutamate + 2 ADP + phosphate + 2 H(+). It catalyses the reaction L-glutamine + H2O = L-glutamate + NH4(+). It participates in amino-acid biosynthesis; L-arginine biosynthesis; carbamoyl phosphate from bicarbonate: step 1/1. The protein operates within pyrimidine metabolism; UMP biosynthesis via de novo pathway; (S)-dihydroorotate from bicarbonate: step 1/3. Functionally, small subunit of the glutamine-dependent carbamoyl phosphate synthetase (CPSase). CPSase catalyzes the formation of carbamoyl phosphate from the ammonia moiety of glutamine, carbonate, and phosphate donated by ATP, constituting the first step of 2 biosynthetic pathways, one leading to arginine and/or urea and the other to pyrimidine nucleotides. The small subunit (glutamine amidotransferase) binds and cleaves glutamine to supply the large subunit with the substrate ammonia. The polypeptide is Carbamoyl phosphate synthase small chain (Halobacterium salinarum (strain ATCC 29341 / DSM 671 / R1)).